A 477-amino-acid chain; its full sequence is MLGVLRIQGALASAGQARLLSVRLLASKSTTDMTTNRGESTQSTSTEHFDIIIGGGGLVGTTLAAALAKNSTLADKKVLLLEGAPEFRGFNPTGPYQNRVSAINHNSIELFKSIDAWKHIESARYKPVKQMQVWESNTDALIQFQHDNFASDVACIIENDLILDAVYALAKESPNVEILNKARIQCVRLPRDSNSNHSELQLEDGRNFSCDLLIGADGANSVVRKEMNVDVFSLNYDRMGLVATLELGEDACDNSVAWQRFLPNGPVALLPLTDRLSSLVWSTTNEQAKMLQALPPTEFVDALNEAFCRQYPRVELADKAVQALNSLFGHNGSQHQVQYPPRVCGVLDKSRATFPLGFLHASSYVCNGAALVGDAAHRVHPLAGQGVNLGFSDVRYLVESLAAGAYAGFKLGDKQHLIKYERKCLAKNVPIMLGVHGLHTLYATQFSPVVLLRSLGLQLTQNLPPVKNLFMRGAMGQ.

Residues 1 to 25 constitute a mitochondrion transit peptide; it reads MLGVLRIQGALASAGQARLLSVRLL.

The protein belongs to the UbiH/COQ6 family. In terms of assembly, component of a multi-subunit COQ enzyme complex. Requires FAD as cofactor.

It localises to the mitochondrion inner membrane. The enzyme catalyses a 4-hydroxy-3-(all-trans-polyprenyl)benzoate + 2 reduced [2Fe-2S]-[ferredoxin] + O2 + 2 H(+) = a 3,4-dihydroxy-5-(all-trans-polyprenyl)benzoate + 2 oxidized [2Fe-2S]-[ferredoxin] + H2O. It catalyses the reaction a 2-methoxy-6-(all-trans-polyprenyl)phenol + 2 reduced [2Fe-2S]-[ferredoxin] + O2 + 2 H(+) = a 2-methoxy-6-(all-trans-polyprenyl)benzene-1,4-diol + 2 oxidized [2Fe-2S]-[ferredoxin] + H2O. The protein operates within cofactor biosynthesis; ubiquinone biosynthesis. Its function is as follows. FAD-dependent monooxygenase required for two non-consecutive steps during ubiquinone biosynthesis. Required for the C5-ring hydroxylation during ubiquinone biosynthesis by catalyzing the hydroxylation of 4-hydroxy-3-(all-trans-polyprenyl)benzoic acid to 3,4-dihydroxy-5-(all-trans-polyprenyl)benzoic acid. Also acts downstream of coq4, for the C1-hydroxylation during ubiquinone biosynthesis by catalyzing the hydroxylation of 2-methoxy-6-(all-trans-polyprenyl)phenol to 2-methoxy-6-(all-trans-polyprenyl)benzene-1,4-diol. The electrons required for the hydroxylation reaction are funneled indirectly to Coq6 from NADPH via a ferredoxin/ferredoxin reductase system. In Drosophila melanogaster (Fruit fly), this protein is Ubiquinone biosynthesis monooxygenase COQ6, mitochondrial.